The following is a 354-amino-acid chain: UDP-N-acetylglucosamine--N-acetylmuramyl-(pentapeptide) pyrophosphoryl-undecaprenol N-acetylglucosamine transferase (354 aa).

UDP-N-acetyl-alpha-D-glucosamine contacts are provided by residues threonine 11 to glycine 13, asparagine 117, arginine 160, serine 186, and glutamine 288.

Belongs to the glycosyltransferase 28 family. MurG subfamily.

Its subcellular location is the cell inner membrane. The enzyme catalyses di-trans,octa-cis-undecaprenyl diphospho-N-acetyl-alpha-D-muramoyl-L-alanyl-D-glutamyl-meso-2,6-diaminopimeloyl-D-alanyl-D-alanine + UDP-N-acetyl-alpha-D-glucosamine = di-trans,octa-cis-undecaprenyl diphospho-[N-acetyl-alpha-D-glucosaminyl-(1-&gt;4)]-N-acetyl-alpha-D-muramoyl-L-alanyl-D-glutamyl-meso-2,6-diaminopimeloyl-D-alanyl-D-alanine + UDP + H(+). The protein operates within cell wall biogenesis; peptidoglycan biosynthesis. Functionally, cell wall formation. Catalyzes the transfer of a GlcNAc subunit on undecaprenyl-pyrophosphoryl-MurNAc-pentapeptide (lipid intermediate I) to form undecaprenyl-pyrophosphoryl-MurNAc-(pentapeptide)GlcNAc (lipid intermediate II). This is UDP-N-acetylglucosamine--N-acetylmuramyl-(pentapeptide) pyrophosphoryl-undecaprenol N-acetylglucosamine transferase from Rickettsia canadensis (strain McKiel).